The chain runs to 67 residues: Large ribosomal subunit protein uL30 (67 aa).

This sequence belongs to the universal ribosomal protein uL30 family. Part of the 50S ribosomal subunit.

The chain is Large ribosomal subunit protein uL30 from Sinorhizobium medicae (strain WSM419) (Ensifer medicae).